The primary structure comprises 1364 residues: Toxin subunit YenA2 (1364 aa).

Positions 1025–1080 (SESYRRRRQEWELQYKQAEWEVNSVEQQINLQNMQIKAANKRLEQVEAQQQQAMAL) form a coiled coil.

Semipurified toxin complex consists of at least YenA1-YenA2-YenB-YenC1-YenC2-Chi1-Chi2. The Yen-TC:K9 subcomplex is about 26 nm tall and 22 nm in diameter with 5-fold symmetry and 5 copies of YenA1, YenA2, Chi1 and Chi2; the chitinase subunits may be solvent accessible on the exterior the complex. The Yen-TC:K9 subcomplex has no insecticidal activity. The native complex with additional YenB, YenC1 and YenC2 subunits is 16 nm taller and is insecticidal; the toxicity-conferring subunits are present at about 1 copy each. Post-translationally, the isolated toxin complex includes 3 peptides starting between residues 768 and 778 of this protein, which might be physiologically relevant.

It is found in the secreted. Part of an orally active toxin complex (TC) with strong insecticidal effects on larvae of the Coleoptera Costelytra zealandica, Acrossidius tasmania and Adoryphorus couloni and some Lepidoptera larvae. The TC has an endochitinase activity. This chain is Toxin subunit YenA2, found in Yersinia entomophaga.